Reading from the N-terminus, the 352-residue chain is B1 bradykinin receptor (352 aa).

The Extracellular segment spans residues 1 to 41 (MASWPPLELQSSNQSQLFPQNATACDNAPEAWDLLHRVLPT). N-linked (GlcNAc...) asparagine glycans are attached at residues asparagine 13 and asparagine 21. Residues 42-62 (FIISICSFGLLGNLFVLLVFL) form a helical membrane-spanning segment. At 63 to 72 (LPRRRLNVAE) the chain is on the cytoplasmic side. Residues 73–93 (IYLANLAASDLVFVLGLPFWA) traverse the membrane as a helical segment. At 94–110 (ENIWNQFNWPFGALLCR) the chain is on the extracellular side. The cysteines at positions 109 and 188 are disulfide-linked. Residues 111–131 (VINGIIKANLFISIFLVVAIS) form a helical membrane-spanning segment. Residues 132-153 (QDRYCVLVHPMASRRRQRRRQA) are Cytoplasmic-facing. Residues 154-174 (RVTCVLIWVVGGLLSIPTFLL) form a helical membrane-spanning segment. The Extracellular segment spans residues 175-206 (RSIQAVPDLNITACILLLPHEAWHFARIVELN). Asparagine 184 is a glycosylation site (N-linked (GlcNAc...) asparagine). Residues 207–227 (ILAFLLPLAAIIFFNYHILAS) traverse the membrane as a helical segment. Residues 228–250 (LRGREEVSRTRCGGSKDSKTTAL) lie on the Cytoplasmic side of the membrane. The helical transmembrane segment at 251-271 (ILTLVVAFLVCWAPYHFFAFL) threads the bilayer. Residues 272–294 (EFLFQVQAVRGCFWEDFIDLGLQ) lie on the Extracellular side of the membrane. A helical membrane pass occupies residues 295-315 (LANFLAFTNSSLNPVIYVFVG). The Cytoplasmic portion of the chain corresponds to 316–352 (RLFRTKVWELYKQCTPKSLAPISSSHRKEIFQLFWRN). Cysteine 329 is lipidated: S-palmitoyl cysteine.

This sequence belongs to the G-protein coupled receptor 1 family. Bradykinin receptor subfamily. BDKRB1 sub-subfamily.

It is found in the cell membrane. Its function is as follows. This is a receptor for bradykinin. Could be a factor in chronic pain and inflammation. This Macaca mulatta (Rhesus macaque) protein is B1 bradykinin receptor (BDKRB1).